The chain runs to 227 residues: Rho-related GTP-binding protein RhoN (227 aa).

14 to 21 (GDAECGKT) is a GTP binding site. The short motif at 36–44 (YVPTVFENY) is the Effector region element. GTP-binding positions include 61–65 (DTSGS) and 119–122 (CKLD). Residues 186-227 (HRQLRRTDSRRGLQRSTQLSGRPDRGNEGEMHKDRAKSCNLM) form a disordered region. Residues 207-227 (RPDRGNEGEMHKDRAKSCNLM) show a composition bias toward basic and acidic residues. Cysteine 224 carries the post-translational modification Cysteine methyl ester. Cysteine 224 is lipidated: S-geranylgeranyl cysteine. The propeptide at 225–227 (NLM) is removed in mature form.

This sequence belongs to the small GTPase superfamily. Rho family. Interacts with the Rho-GAP domain of RACGAP1. Interacts with UBXD5. Interacts with PRAG1. As to expression, expressed specifically in neurons in the brain and spinal cord and also in hepatic stellate cells.

The protein resides in the cytoplasmic vesicle. The protein localises to the secretory vesicle. It localises to the acrosome membrane. In terms of biological role, may be specifically involved in neuronal and hepatic functions. Is a C3 toxin-insensitive member of the Rho subfamily. In Mus musculus (Mouse), this protein is Rho-related GTP-binding protein RhoN (Rnd2).